The following is a 218-amino-acid chain: Octanoyltransferase (218 aa).

The BPL/LPL catalytic domain occupies 27 to 210 (AGAEETLYLL…QFRAIFADST (184 aa)). Residues 72–79 (RGGNITCH), 139–141 (SIG), and 152–154 (GFA) each bind substrate. Catalysis depends on C170, which acts as the Acyl-thioester intermediate.

This sequence belongs to the LipB family.

The protein resides in the cytoplasm. It carries out the reaction octanoyl-[ACP] + L-lysyl-[protein] = N(6)-octanoyl-L-lysyl-[protein] + holo-[ACP] + H(+). The protein operates within protein modification; protein lipoylation via endogenous pathway; protein N(6)-(lipoyl)lysine from octanoyl-[acyl-carrier-protein]: step 1/2. Functionally, catalyzes the transfer of endogenously produced octanoic acid from octanoyl-acyl-carrier-protein onto the lipoyl domains of lipoate-dependent enzymes. Lipoyl-ACP can also act as a substrate although octanoyl-ACP is likely to be the physiological substrate. In Nitratidesulfovibrio vulgaris (strain DSM 19637 / Miyazaki F) (Desulfovibrio vulgaris), this protein is Octanoyltransferase.